Reading from the N-terminus, the 484-residue chain is Calcium uniporter protein, mitochondrial (484 aa).

Residues 1–33 (MGHVLGGTLLAANRLARPPAVVLGKPRVCCWRA) constitute a mitochondrion transit peptide. The Mitochondrial matrix segment spans residues 34–304 (SPWPVIVSSA…CDLLAHKGAH (271 aa)). 2 disordered regions span residues 59-104 (ARYE…KGRL) and 188-227 (YTGG…DTHW). Residues 61–82 (YEARGRSTTQRKVDDRPWHRES) show a composition bias toward basic and acidic residues. The span at 83-93 (SGSLPKSTSPD) shows a compositional bias: polar residues. A helical membrane pass occupies residues 305–326 (ALAKGGFAALAAWWGIVYYVTF). Topologically, residues 327 to 334 (HTDMGWDL) are mitochondrial intermembrane. The Selectivity filter motif lies at 332–340 (WDLVEPITY). The chain crosses the membrane as a helical span at residues 335 to 355 (VEPITYLAGLASIMGGYLWFL). Ca(2+) is bound at residue glutamate 336. Over 356 to 484 (FISRDLSYKA…NEAAANVPGD (129 aa)) the chain is Mitochondrial matrix. Composition is skewed to basic and acidic residues over residues 426–435 (KEVLEEEKGG) and 452–462 (DHDHDHDHVSH). Residues 426-484 (KEVLEEEKGGKARKREQEDEDGDGDDDHDHDHDHVSHGAELQGQDILHANEAAANVPGD) form a disordered region.

Belongs to the MCU (TC 1.A.77) family. Homotetramer, assembles in a dimer or dimers configuration with two interfaces.

The protein localises to the mitochondrion inner membrane. It catalyses the reaction Ca(2+)(in) = Ca(2+)(out). Inhibited by ruthenium red or its derivative Ru360. In terms of biological role, highly selective calcium channel localized to the inner mitochondrial membrane, which mediates calcium uptake into the mitochondrial matrix. Mitochondrial calcium homeostasis plays key roles in cellular physiology and regulates ATP production, cytoplasmic calcium signals and activation of cell death pathways. Sufficient to operate as a pore-forming channel without the need of calcium-sensor or auxiliary subunit. The polypeptide is Calcium uniporter protein, mitochondrial (Metarhizium acridum (strain CQMa 102)).